A 446-amino-acid chain; its full sequence is D(1A) dopamine receptor (446 aa).

At 1-22 (MAPNTSTMDEAGLPAERDFSFR) the chain is on the extracellular side. N-linked (GlcNAc...) asparagine glycosylation is present at asparagine 4. A helical membrane pass occupies residues 23 to 48 (ILTACFLSLLILSTLLGNTLVCAAVI). Topologically, residues 49–59 (RFRHLRSKVTN) are cytoplasmic. The helical transmembrane segment at 60–86 (FFVISLAVSDLLVAVLVMPWKAVAEIA) threads the bilayer. The Extracellular segment spans residues 87 to 95 (GFWPLGPFC). A disulfide bridge connects residues cysteine 95 and cysteine 186. Residues 96–118 (NIWVAFDIMCSTASILNLCVISV) form a helical membrane-spanning segment. The Cytoplasmic segment spans residues 119 to 137 (DRYWAISSPFQYERKMTPK). A helical transmembrane segment spans residues 138–162 (AAFILISVAWTLSVLISFIPVQLSW). The Extracellular portion of the chain corresponds to 163-192 (HKAKPTWPLDGNFTSLEDTEDDNCDTRLSR). A helical transmembrane segment spans residues 193–218 (TYAISSSLISFYIPVAIMIVTYTSIY). The Cytoplasmic portion of the chain corresponds to 219 to 272 (RIAQKQIRRISALERAAVHAKNCQTTAGNGNPVECAQSESSFKMSFKRETKVLK). Residues 273–299 (TLSVIMGVFVCCWLPFFISNCMVPFCG) traverse the membrane as a helical segment. Topologically, residues 300 to 312 (SEETQPFCIDSIT) are extracellular. Residues 313-337 (FDVFVWFGWANSSLNPIIYAFNADF) traverse the membrane as a helical segment. The Cytoplasmic segment spans residues 338–446 (QKAFSTLLGC…PVTHSGQHST (109 aa)). 2 S-palmitoyl cysteine lipidation sites follow: cysteine 347 and cysteine 351.

Belongs to the G-protein coupled receptor 1 family. In terms of assembly, interacts with DNAJC14 via its C-terminus PubMed:11331877. Interacts with DRD2. Interacts with DORIP1. In terms of processing, N-glycosylated. In terms of tissue distribution, brain, in the striatum, the nucleus accumbens, and the olfactory tubercle.

Its subcellular location is the cell membrane. It localises to the endoplasmic reticulum membrane. The protein localises to the cell projection. The protein resides in the dendrite. It is found in the cilium membrane. Its subcellular location is the dendritic spine. Its function is as follows. Dopamine receptor whose activity is mediated by G proteins which activate adenylyl cyclase. In Rattus norvegicus (Rat), this protein is D(1A) dopamine receptor (Drd1).